Here is a 52-residue protein sequence, read N- to C-terminus: Defensin-like protein 2B (52 aa).

Disulfide bonds link cysteine 4–cysteine 52, cysteine 16–cysteine 37, cysteine 22–cysteine 46, and cysteine 26–cysteine 48.

In terms of assembly, forms oligomers in its native state.

Its function is as follows. Possesses antifungal activity sensitive to inorganic cations. The chain is Defensin-like protein 2B from Sinapis alba (White mustard).